The chain runs to 105 residues: Large ribosomal subunit protein uL24 (105 aa).

The protein belongs to the universal ribosomal protein uL24 family. Part of the 50S ribosomal subunit.

In terms of biological role, one of two assembly initiator proteins, it binds directly to the 5'-end of the 23S rRNA, where it nucleates assembly of the 50S subunit. Functionally, one of the proteins that surrounds the polypeptide exit tunnel on the outside of the subunit. The chain is Large ribosomal subunit protein uL24 from Chromohalobacter salexigens (strain ATCC BAA-138 / DSM 3043 / CIP 106854 / NCIMB 13768 / 1H11).